A 209-amino-acid chain; its full sequence is Large ribosomal subunit protein uL3 (209 aa).

Positions 144-165 (GSMGAASDPSRTFKNKKMPGHM) are disordered.

The protein belongs to the universal ribosomal protein uL3 family. Part of the 50S ribosomal subunit. Forms a cluster with proteins L14 and L19.

Functionally, one of the primary rRNA binding proteins, it binds directly near the 3'-end of the 23S rRNA, where it nucleates assembly of the 50S subunit. This is Large ribosomal subunit protein uL3 from Clostridium novyi (strain NT).